The following is a 191-amino-acid chain: Superoxide dismutase [Mn/Fe] (191 aa).

4 residues coordinate Fe(3+): His-27, His-74, Asp-157, and His-161. Mn(2+) contacts are provided by His-27, His-74, Asp-157, and His-161.

This sequence belongs to the iron/manganese superoxide dismutase family. Homodimer. Mn(2+) serves as cofactor. It depends on Fe(3+) as a cofactor.

The catalysed reaction is 2 superoxide + 2 H(+) = H2O2 + O2. Its activity is regulated as follows. Inhibited by hydrogen peroxide. Functionally, destroys superoxide anion radicals which are normally produced within the cells and which are toxic to biological systems. Catalyzes the dismutation of superoxide anion radicals into O2 and H2O2 by successive reduction and oxidation of the transition metal ion at the active site. This is Superoxide dismutase [Mn/Fe] (sodB) from Porphyromonas gingivalis (strain ATCC BAA-308 / W83).